A 107-amino-acid polypeptide reads, in one-letter code: UPF0060 membrane protein mll7841 (107 aa).

The next 4 helical transmembrane spans lie at 4–24, 30–50, 60–80, and 87–107; these read LFYT…WAWW, PLWL…LALV, AAYG…VEGV, and LAGA…PRGA.

It belongs to the UPF0060 family.

The protein localises to the cell inner membrane. In Mesorhizobium japonicum (strain LMG 29417 / CECT 9101 / MAFF 303099) (Mesorhizobium loti (strain MAFF 303099)), this protein is UPF0060 membrane protein mll7841.